Reading from the N-terminus, the 483-residue chain is Protein DETOXIFICATION 6 (483 aa).

Transmembrane regions (helical) follow at residues 38–58, 69–89, 113–133, 146–166, 187–207, 211–231, 263–283, 292–312, 334–354, 376–396, 405–425, and 436–456; these read ALPM…SVMV, GVAL…FGLA, FSAI…WFYM, ISKV…AQAV, AITT…AFGL, GAAL…ALYV, AAMT…SGLL, VLSI…GIGA, VFAG…LLFI, LSPL…LGGV, IGAW…GLFL, and LWIG…IVTA.

Belongs to the multi antimicrobial extrusion (MATE) (TC 2.A.66.1) family.

It is found in the membrane. The sequence is that of Protein DETOXIFICATION 6 from Arabidopsis thaliana (Mouse-ear cress).